The chain runs to 457 residues: Peptidyl-prolyl cis-trans isomerase FKBP5 (457 aa).

The residue at position 1 (Met-1) is an N-acetylmethionine. Positions 1 to 11 (MTTDEGAKSSR) are enriched in basic and acidic residues. Residues 1–28 (MTTDEGAKSSRENPAATVAEQGEDVTSK) form a disordered region. Lys-28 bears the N6-acetyllysine mark. PPIase FKBP-type domains are found at residues 50-138 (GDKV…LNFK) and 165-251 (GARV…KSFE). TPR repeat units follow at residues 268–301 (AAIVKEEGTVYFKGGKYVQAVIQYGKIVSWLEME), 317–350 (LAAFLNLAMCYLKLREYAKAVECCDKALGLDSAN), and 351–384 (EKGLYRRGEAQLLMNEFESAKGDFEKVLEVNPQN). The interval 424 to 457 (EANKAVSKKTSEGVTNEKLTVSHAVEEEKPEGHV) is disordered. Ser-445 bears the Phosphoserine mark. The segment covering 447–457 (AVEEEKPEGHV) has biased composition (basic and acidic residues).

In terms of assembly, part of a heteromultimeric cytoplasmic complex with HSP90AA1, HSPA1A/HSPA1B and steroid receptors. Upon ligand binding dissociates from the complex and FKBP4 takes its place. Interacts with functionally mature heterooligomeric progesterone receptor complexes along with HSP90 and TEBP. Interacts with NR3C1. Interacts with Akt/AKT1 and PHLPP1; enhancing dephosphorylation and subsequent activation of Akt/AKT1. Interacts with IFI44L; this interaction modulates the kinase activity of IKBKB and IKBKE. Interacts with IKBKB and IKBKE. Acetylation impairs ability to promote interaction between Akt/AKT1 and PHLPP1. Deacetylation by SIRT7 promotes interaction between Akt/AKT1 and PHLPP1, leading to suppress Akt/AKT1 activation. In terms of processing, ubiquitinated, leading to degradation in a proteasome-dependent manner. Deubiquitinated by USP49, leading to stabilization.

Its subcellular location is the cytoplasm. It is found in the nucleus. The enzyme catalyses [protein]-peptidylproline (omega=180) = [protein]-peptidylproline (omega=0). Inhibited by both FK506 and rapamycin. Its function is as follows. Immunophilin protein with PPIase and co-chaperone activities. Component of unligated steroid receptors heterocomplexes through interaction with heat-shock protein 90 (HSP90). Plays a role in the intracellular trafficking of heterooligomeric forms of steroid hormone receptors maintaining the complex into the cytoplasm when unliganded. Acts as a regulator of Akt/AKT1 activity by promoting the interaction between Akt/AKT1 and PHLPP1, thereby enhancing dephosphorylation and subsequent activation of Akt/AKT1. Interacts with IKBKE and IKBKB which facilitates IKK complex assembly leading to increased IKBKE and IKBKB kinase activity, NF-kappaB activation, and IFN production. This Saguinus oedipus (Cotton-top tamarin) protein is Peptidyl-prolyl cis-trans isomerase FKBP5 (FKBP5).